The following is a 263-amino-acid chain: Uracil-DNA glycosylase (263 aa).

The Proton acceptor role is filled by Asp-94.

Belongs to the uracil-DNA glycosylase (UDG) superfamily. UNG family.

Its subcellular location is the cytoplasm. It catalyses the reaction Hydrolyzes single-stranded DNA or mismatched double-stranded DNA and polynucleotides, releasing free uracil.. Its function is as follows. Excises uracil residues from the DNA which can arise as a result of misincorporation of dUMP residues by DNA polymerase or due to deamination of cytosine. This Ralstonia pickettii (strain 12J) protein is Uracil-DNA glycosylase.